Reading from the N-terminus, the 123-residue chain is uncharacterized protein (123 aa).

Residues 1 to 12 show a composition bias toward polar residues; the sequence is MALNNVSLSSGD. Disordered stretches follow at residues 1-25 and 53-91; these read MALN…SHGD and PRQA…RFSP. The segment covering 61–82 has biased composition (basic and acidic residues); it reads VRAESRRVDGGGRSPREPDGRG.

This is an uncharacterized protein from Homo sapiens (Human).